Here is a 138-residue protein sequence, read N- to C-terminus: Transcription antitermination protein NusB (138 aa).

Belongs to the NusB family.

Its function is as follows. Involved in transcription antitermination. Required for transcription of ribosomal RNA (rRNA) genes. Binds specifically to the boxA antiterminator sequence of the ribosomal RNA (rrn) operons. In Coxiella burnetii (strain CbuK_Q154) (Coxiella burnetii (strain Q154)), this protein is Transcription antitermination protein NusB.